Consider the following 887-residue polypeptide: 3-hydroxy-3-methylglutaryl-coenzyme A reductase (887 aa).

At 1–9 the chain is on the cytoplasmic side; sequence MLSRLFRMH. The helical transmembrane segment at 10–39 threads the bilayer; it reads GLFVASHPWEVIVGTVTLTICMMSMNMFTG. Over 40 to 56 the chain is Lumenal; that stretch reads NNKICGWNYECPKFEED. A helical transmembrane segment spans residues 57–78; sequence VLSSDIIILTITRCIAILYIYF. Positions 61–218 constitute an SSD domain; sequence DIIILTITRC…MTFFPACVSL (158 aa). Positions 75–78 match the INSIG-binding motif motif; that stretch reads YIYF. Over 79–89 the chain is Cytoplasmic; it reads QFQNLRQLGSK. K89 is covalently cross-linked (Glycyl lysine isopeptide (Lys-Gly) (interchain with G-Cter in ubiquitin)). Residues 90-114 form a helical membrane-spanning segment; sequence YILGIAGLFTIFSSFVFSTVVIHFL. Residues 115 to 123 lie on the Lumenal side of the membrane; sequence DKELTGLNE. A helical transmembrane segment spans residues 124-149; it reads ALPFFLLLIDLSRASALAKFALSSNS. The Cytoplasmic portion of the chain corresponds to 150–159; the sequence is QDEVRENIAR. Residues 160–187 traverse the membrane as a helical segment; sequence GMAILGPTFTLDALVECLVIGVGTMSGV. At 188-191 the chain is on the lumenal side; it reads RQLE. A helical membrane pass occupies residues 192 to 220; it reads IMCCFGCMSVLANYFVFMTFFPACVSLVL. Over 221–248 the chain is Cytoplasmic; it reads ELSRESREGRPIWQLSHFARVLEEEENK. Residue K248 forms a Glycyl lysine isopeptide (Lys-Gly) (interchain with G-Cter in ubiquitin) linkage. Residues 249–275 traverse the membrane as a helical segment; the sequence is PNPVTQRVKMIMSLGLVLVHAHSRWIA. The Lumenal segment spans residues 276 to 314; that stretch reads DPSPQNSTTEHSKVSLGLDEDVSKRIEPSVSLWQFYLSK. N-linked (GlcNAc...) asparagine glycosylation is present at N281. A helical transmembrane segment spans residues 315–339; the sequence is MISMDIEQVVTLSLAFLLAVKYIFF. At 340–887 the chain is on the cytoplasmic side; it reads EQAETESTLS…LQGTCTKKAA (548 aa). Residues E558, K690, and D766 each act as charge relay system in the active site. Catalysis depends on H865, which acts as the Proton donor. Position 871 is a phosphoserine; by AMPK (S871).

The protein belongs to the HMG-CoA reductase family. Homotetramer. Homodimer. Interacts (via its SSD) with INSIG1; the interaction, accelerated by sterols, leads to the recruitment of HMGCR to AMFR/gp78 for its ubiquitination by the sterol-mediated ERAD pathway. Interacts with UBIAD1. In terms of processing, undergoes sterol-mediated ubiquitination and ER-associated degradation (ERAD). Accumulation of sterols in the endoplasmic reticulum (ER) membrane, triggers binding of the reductase to the ER membrane protein INSIG1 or INSIG2. The INSIG1 binding leads to the recruitment of the ubiquitin ligase, AMFR/gp78, RNF139 or RNF145, initiating ubiquitination of the reductase. The ubiquitinated reductase is then extracted from the ER membrane and delivered to cytosolic 26S proteosomes by a mechanism probably mediated by the ATPase Valosin-containing protein VCP/p97. The INSIG2-binding leads to the recruitment of the ubiquitin ligase RNF139, initiating ubiquitination of the reductase. Lys-248 is the main site of ubiquitination. Ubiquitination is enhanced by the presence of a geranylgeranylated protein. N-glycosylated. Deglycosylated by NGLY1 on release from the endoplasmic reticulum (ER) in a sterol-mediated manner. Post-translationally, phosphorylated. Phosphorylation at Ser-871 reduces the catalytic activity.

It localises to the endoplasmic reticulum membrane. Its subcellular location is the peroxisome membrane. The enzyme catalyses (R)-mevalonate + 2 NADP(+) + CoA = (3S)-3-hydroxy-3-methylglutaryl-CoA + 2 NADPH + 2 H(+). The protein operates within metabolic intermediate biosynthesis; (R)-mevalonate biosynthesis; (R)-mevalonate from acetyl-CoA: step 3/3. Its activity is regulated as follows. Regulated by a negative feedback mechanism through sterols and non-sterol metabolites derived from mevalonate. Phosphorylation at Ser-871 down-regulates the catalytic activity. Catalyzes the conversion of (3S)-hydroxy-3-methylglutaryl-CoA (HMG-CoA) to mevalonic acid, the rate-limiting step in the synthesis of cholesterol and other isoprenoids, thus plays a critical role in cellular cholesterol homeostasis. The protein is 3-hydroxy-3-methylglutaryl-coenzyme A reductase (HMGCR) of Mesocricetus auratus (Golden hamster).